The following is a 248-amino-acid chain: Granulin (248 aa).

The protein belongs to the polyhedrin family.

Component of the virus occlusion bodies, which are large proteinaceous structures, that protect the virus from the outside environment for extended periods until they are ingested by insect larvae. The polypeptide is Granulin (Xestia c-nigrum granulosis virus (XnGV)).